The primary structure comprises 224 residues: tRNA (guanine-N(7)-)-methyltransferase (224 aa).

S-adenosyl-L-methionine is bound by residues Glu45, Glu70, Asp97, and Asp119. Residue Asp119 is part of the active site. Residues Lys123, Asp155, and 199-202 (TEYE) each bind substrate.

This sequence belongs to the class I-like SAM-binding methyltransferase superfamily. TrmB family.

The catalysed reaction is guanosine(46) in tRNA + S-adenosyl-L-methionine = N(7)-methylguanosine(46) in tRNA + S-adenosyl-L-homocysteine. It functions in the pathway tRNA modification; N(7)-methylguanine-tRNA biosynthesis. Functionally, catalyzes the formation of N(7)-methylguanine at position 46 (m7G46) in tRNA. The chain is tRNA (guanine-N(7)-)-methyltransferase from Ureaplasma parvum serovar 3 (strain ATCC 27815 / 27 / NCTC 11736).